The sequence spans 356 residues: MDIVLEVCDTFLFDPLYATLLPAQASSFTANATANATLSSIRQEPTAYALPHASWQYEPATKYFSIEPSKYAYMSSWPRDDWRRQALTLYLITWLFGVCVYYLFAGLSYLLVFDKATFNHPRYLKHQIKLEMKQANIAFPIMAIFTVPWFLAEVRGYSKLYDTTEKGPGRWYDYLQIPFFIAFTDLCIYWIHRGLHHPMVYKHIHKPHHKWIMPTPFASHAFHPIDGYAQGLPYYIFPFLFPLSKIASVAFFVFVNIWTVLIHDGEYAHNSPIINGAACHTMHHLYFNYNYGQFTTLWDRLGGSYRKPNDELFKRELKMCQDEWNKQAKAVDMMVEQVEGENDRSYQGEPESKKVQ.

Transmembrane regions (helical) follow at residues 87-107 (LTLY…FAGL), 134-154 (QANI…LAEV), and 171-191 (WYDY…IYWI). The Fatty acid hydroxylase domain occupies 179–303 (FFIAFTDLCI…FTTLWDRLGG (125 aa)). The Histidine box-1 motif lies at 192–196 (HRGLH). The Histidine box-2 signature appears at 205–209 (HKPHH). Residues 235-255 (YIFPFLFPLSKIASVAFFVFV) form a helical membrane-spanning segment. A Histidine box-3 motif is present at residues 280-284 (HTMHH).

Belongs to the sterol desaturase family. The cofactor is Fe cation.

Its subcellular location is the endoplasmic reticulum membrane. The enzyme catalyses a Delta(7)-sterol + 2 Fe(II)-[cytochrome b5] + O2 + 2 H(+) = a Delta(5),Delta(7)-sterol + 2 Fe(III)-[cytochrome b5] + 2 H2O. It participates in steroid metabolism; ergosterol biosynthesis; ergosterol from zymosterol: step 3/5. Catalyzes the introduction of a C-5 double bond in the B ring of ergosterol. May contribute to the regulation of ergosterol biosynthesis. The sequence is that of Delta(7)-sterol 5(6)-desaturase (ERG3) from Leptosphaeria maculans (Blackleg fungus).